The chain runs to 104 residues: Flagellar hook-basal body complex protein FliE (104 aa).

The protein belongs to the FliE family.

Its subcellular location is the bacterial flagellum basal body. The chain is Flagellar hook-basal body complex protein FliE from Escherichia coli O6:K15:H31 (strain 536 / UPEC).